The chain runs to 98 residues: Elicitin Vex1 (98 aa).

3 disulfide bridges follow: C3/C71, C27/C56, and C51/C95. N-linked (GlcNAc...) asparagine glycosylation is present at N92.

It belongs to the elicitin family.

The protein resides in the secreted. Induces local and distal defense responses (incompatible hypersensitive reaction) in plants from the solanaceae and cruciferae families. Elicits leaf necrosis and causes the accumulation of pathogenesis-related proteins. Might interact with the lipidic molecules of the plasma membrane. In Phytopythium vexans (Damping-off fungus), this protein is Elicitin Vex1.